The chain runs to 323 residues: L-lactate dehydrogenase (323 aa).

Positions 11, 32, and 63 each coordinate NAD(+). Q80 and R86 together coordinate substrate. Residues S99, 116-118, and S141 each bind NAD(+); that span reads VSN. Residue 118–121 coordinates substrate; it reads NPVD. 146–149 contacts substrate; that stretch reads DTAR. R151 and H166 together coordinate beta-D-fructose 1,6-bisphosphate. Catalysis depends on H173, which acts as the Proton acceptor. Y221 carries the phosphotyrosine modification. T230 lines the substrate pocket.

The protein belongs to the LDH/MDH superfamily. LDH family. As to quaternary structure, homotetramer.

Its subcellular location is the cytoplasm. It carries out the reaction (S)-lactate + NAD(+) = pyruvate + NADH + H(+). It participates in fermentation; pyruvate fermentation to lactate; (S)-lactate from pyruvate: step 1/1. Allosterically activated by fructose 1,6-bisphosphate (FBP). In terms of biological role, catalyzes the conversion of lactate to pyruvate. This is L-lactate dehydrogenase from Kosmotoga olearia (strain ATCC BAA-1733 / DSM 21960 / TBF 19.5.1).